We begin with the raw amino-acid sequence, 156 residues long: Peptide methionine sulfoxide reductase MsrA (156 aa).

Residue Cys-10 is part of the active site.

This sequence belongs to the MsrA Met sulfoxide reductase family.

It catalyses the reaction L-methionyl-[protein] + [thioredoxin]-disulfide + H2O = L-methionyl-(S)-S-oxide-[protein] + [thioredoxin]-dithiol. It carries out the reaction [thioredoxin]-disulfide + L-methionine + H2O = L-methionine (S)-S-oxide + [thioredoxin]-dithiol. Its function is as follows. Has an important function as a repair enzyme for proteins that have been inactivated by oxidation. Catalyzes the reversible oxidation-reduction of methionine sulfoxide in proteins to methionine. This is Peptide methionine sulfoxide reductase MsrA from Acidobacterium capsulatum (strain ATCC 51196 / DSM 11244 / BCRC 80197 / JCM 7670 / NBRC 15755 / NCIMB 13165 / 161).